A 483-amino-acid polypeptide reads, in one-letter code: Glutamate--tRNA ligase (483 aa).

The 'HIGH' region motif lies at 9 to 19; the sequence is PSPTGFLHIGN. Positions 253–257 match the 'KMSKS' region motif; that stretch reads KLSKR. Position 256 (lysine 256) interacts with ATP.

It belongs to the class-I aminoacyl-tRNA synthetase family. Glutamate--tRNA ligase type 1 subfamily. In terms of assembly, monomer.

It is found in the cytoplasm. The catalysed reaction is tRNA(Glu) + L-glutamate + ATP = L-glutamyl-tRNA(Glu) + AMP + diphosphate. Its function is as follows. Catalyzes the attachment of glutamate to tRNA(Glu) in a two-step reaction: glutamate is first activated by ATP to form Glu-AMP and then transferred to the acceptor end of tRNA(Glu). The sequence is that of Glutamate--tRNA ligase from Mycoplasma capricolum subsp. capricolum (strain California kid / ATCC 27343 / NCTC 10154).